Reading from the N-terminus, the 216-residue chain is Lipoprotein-releasing system ATP-binding protein LolD (216 aa).

The ABC transporter domain maps to 2–216 (IHLEGITKSF…TIHMVDGNII (215 aa)). 34 to 41 (GPSGAGKT) provides a ligand contact to ATP.

The protein belongs to the ABC transporter superfamily. Lipoprotein translocase (TC 3.A.1.125) family. The complex is composed of two ATP-binding proteins (LolD) and two transmembrane proteins (LolC and LolE).

It localises to the cell inner membrane. Functionally, part of the ABC transporter complex LolCDE involved in the translocation of mature outer membrane-directed lipoproteins, from the inner membrane to the periplasmic chaperone, LolA. Responsible for the formation of the LolA-lipoprotein complex in an ATP-dependent manner. The chain is Lipoprotein-releasing system ATP-binding protein LolD from Bacteroides fragilis (strain YCH46).